Reading from the N-terminus, the 303-residue chain is Probable 5-dehydro-4-deoxyglucarate dehydratase (303 aa).

Belongs to the DapA family.

The enzyme catalyses 5-dehydro-4-deoxy-D-glucarate + H(+) = 2,5-dioxopentanoate + CO2 + H2O. Its pathway is carbohydrate acid metabolism; D-glucarate degradation; 2,5-dioxopentanoate from D-glucarate: step 2/2. This is Probable 5-dehydro-4-deoxyglucarate dehydratase from Azotobacter vinelandii (strain DJ / ATCC BAA-1303).